A 467-amino-acid polypeptide reads, in one-letter code: MATGKIVQIIGAVVDVEFPQSEVPSVYDALNVTDSKERLVLEVQQQLGGGVVRCIVMGSSDGLRRGVEVVNTGAPISVPVGTKTLGRIMNVLGDAIDERGEIGAEEVYSIHREAPSYEEQSNETALLETGVKVIDLVCPFAKGGKIGLFGGAGVGKTVNMMELINNIALQHSGLSVFAGVGERTREGNDFYYEMQEAGVVNVENPEESKVAMVYGQMNEPPGNRLRVALTGLTMAERFRDEGRDVLLFVDNIYRYTLAGTEVSALLGRMPSAVGYQPTLAEEMGVLQERITSTKQGSITSVQAVYVPADDLTDPSPATTFAHLDATVVLNRNIAAMGLYPAIDPLDSTSRQLDPLVVGQDHYDTARGVQQTLQRYKELKDIIAILGMDELSEEDKQVVSRARKIERFLTQPYHVAEVFTGDPGVYVPLKETLRGFKGLLAGEYDDIPEQAFMYCGTIDDAIENAKKL.

Position 150-157 (150-157 (GGAGVGKT)) interacts with ATP.

It belongs to the ATPase alpha/beta chains family. As to quaternary structure, F-type ATPases have 2 components, CF(1) - the catalytic core - and CF(0) - the membrane proton channel. CF(1) has five subunits: alpha(3), beta(3), gamma(1), delta(1), epsilon(1). CF(0) has three main subunits: a(1), b(2) and c(9-12). The alpha and beta chains form an alternating ring which encloses part of the gamma chain. CF(1) is attached to CF(0) by a central stalk formed by the gamma and epsilon chains, while a peripheral stalk is formed by the delta and b chains.

Its subcellular location is the cell inner membrane. The catalysed reaction is ATP + H2O + 4 H(+)(in) = ADP + phosphate + 5 H(+)(out). In terms of biological role, produces ATP from ADP in the presence of a proton gradient across the membrane. The catalytic sites are hosted primarily by the beta subunits. The polypeptide is ATP synthase subunit beta 1 (Vibrio campbellii (strain ATCC BAA-1116)).